A 203-amino-acid chain; its full sequence is CASP-like protein 2U2 (203 aa).

The tract at residues 1 to 21 is disordered; sequence MGGFVDDGAAGLAPSHGSSRA. Residues 1–27 lie on the Cytoplasmic side of the membrane; it reads MGGFVDDGAAGLAPSHGSSRAGRGLEG. The helical transmembrane segment at 28–48 threads the bilayer; the sequence is AGVFLRFVASLLSIAGLMLLV. Over 49–73 the chain is Extracellular; the sequence is KDNQTVQQMVATEAVTLETKYSDIS. Asparagine 51 is a glycosylation site (N-linked (GlcNAc...) asparagine). Residues 74–94 form a helical membrane-spanning segment; it reads AFVFLLYTNGLVAVYCFFLAL. Residues 95–108 are Cytoplasmic-facing; that stretch reads ASVFSLIASARSGK. Residues 109 to 129 traverse the membrane as a helical segment; it reads LAGWVTFVLDQGLAYVLLAAA. Topologically, residues 130 to 163 are extracellular; that stretch reads AASTEVLYLAENGDLKTSWAEICSQFGHFCHMAR. Residues 164 to 184 form a helical membrane-spanning segment; the sequence is ASIVVSFLSMLAMAVLSVMSA. The Cytoplasmic segment spans residues 185–203; that stretch reads QQLFSKYRRPMTAKTAQDI.

It belongs to the Casparian strip membrane proteins (CASP) family. Homodimer and heterodimers.

The protein localises to the cell membrane. This chain is CASP-like protein 2U2, found in Osmunda lancea (Fern).